Reading from the N-terminus, the 95-residue chain is DASH complex subunit DAD3 (95 aa).

This sequence belongs to the DASH complex DAD3 family. Component of the DASH complex consisting of ASK1, DAD1, DAD2, DAD3, DAD4, DAM1, DUO1, HSK3, SPC19 and SPC34, with a stoichiometry of one copy of each subunit per complex. Multiple DASH complexes oligomerize to form a ring that encircles spindle microtubules and organizes the rod-like NDC80 complexes of the outer kinetochore. DASH complex oligomerization strengthens microtubule attachments. On cytoplasmic microtubules, DASH complexes appear to form patches instead of rings.

The protein localises to the chromosome. Its subcellular location is the centromere. It localises to the kinetochore. The protein resides in the cytoplasm. It is found in the cytoskeleton. The protein localises to the spindle. Its subcellular location is the nucleus. Its function is as follows. Component of the DASH complex that connects microtubules with kinetochores and couples microtubule depolymerisation to chromosome movement; it is involved in retrieving kinetochores to the spindle poles before their re-orientation on the spindle in early mitosis and allows microtubule depolymerization to pull chromosomes apart and resist detachment during anaphase. Kinetochores, consisting of a centromere-associated inner segment and a microtubule-contacting outer segment, play a crucial role in chromosome segregation by mediating the physical connection between centromeric DNA and microtubules. Kinetochores also serve as an input point for the spindle assembly checkpoint, which delays anaphase until all chromosomes have bioriented on the mitotic spindle. In Chaetomium thermophilum (strain DSM 1495 / CBS 144.50 / IMI 039719) (Thermochaetoides thermophila), this protein is DASH complex subunit DAD3.